The chain runs to 707 residues: MSPAVDTASTAKDPISVMKSNASAAAADQIKTHEYEHLTSVPIVQPLPITDRLSSEAAQKYKPNLPGGFEEYKSLHKESLENPAKFYHERAQLLNWFKPYDQVFIPDTEGKPTFENNAWFTNGQLNACYNLVDRHAFTQPNKVAILYEADEPGQGYSLTYAELLEQVCKVAQILQYSMNVKKGDTVAVYMPMIPQALITLLAITRIGAIHSVVFAGFSSNSLRDRINDAYSKTVITTDESKRGGKTIETKRIVDEALKDTPQVTNVLVFKRTHNENIKYIPGRDLDWDEEVKKYKSYTPCEPVDSEHPLFLLYTSGSTGAPKGVQHSTAGYLLQALLSMKYTFDIQNDDIFFTAGDIGWITGHTYCVYGPLLQGCTTLVFEGTPAYPNFSRYWEIVDKYQVTQFYVAPTALRLLKRAGDSFTEGFSLKSLRSLGSVGEPIAAEVWEWYSEKIGKNELPIVDTYWQTESGSHLVTPLAGGATPMKPGAAAFPFFGIDLAVLDPTTGIEQTGEHAEGVLAIKRPWPSFARTIWKNNDRFLDTYLKPYPGYYFTGDGVARDKDGFFWILGRVDDVVNVSGHRLSTAEIEAAIIEDDMVAECAVVGFNDELTGQAVAAFVVLKNKSSLTAASESELQDIKKHLIITVRKDIGPFAAPKLIVLVDDLPKTRSGKIMRRILRKILAGESDQLGDVSTLSNPGIVKHLIDSVKL.

CoA contacts are provided by residues 242–245 (RGGK) and T361. Residues 437 to 439 (GEP), 461 to 466 (DTYWQT), D553, and R568 contribute to the ATP site. Position 576 (S576) interacts with CoA. R579 serves as a coordination point for ATP. R644 contacts CoA. The Microbody targeting signal motif lies at 705–707 (VKL).

The protein belongs to the ATP-dependent AMP-binding enzyme family.

The protein localises to the microsome. It is found in the endoplasmic reticulum. It catalyses the reaction acetate + ATP + CoA = acetyl-CoA + AMP + diphosphate. In terms of biological role, may be required for assimilation of ethanol and acetate. This chain is Acetyl-coenzyme A synthetase 1 (ACS1), found in Kluyveromyces lactis (strain ATCC 8585 / CBS 2359 / DSM 70799 / NBRC 1267 / NRRL Y-1140 / WM37) (Yeast).